The chain runs to 490 residues: 5'-3' exonuclease PLD3 (490 aa).

At Met-1–Trp-38 the chain is on the cytoplasmic side. A helical; Signal-anchor for type II membrane protein membrane pass occupies residues Val-39 to Leu-59. At Trp-60–Leu-490 the chain is on the lumenal side. Intrachain disulfides connect Cys-77/Cys-239 and Cys-81/Cys-237. Asn-97 and Asn-132 each carry an N-linked (GlcNAc...) asparagine glycan. In terms of domain architecture, PLD phosphodiesterase 1 spans Thr-196–Ser-223. Residues His-201, Lys-203, and Asp-208 contribute to the active site. Catalysis depends on His-201, which acts as the Proton donor. The phosphate site is built by His-201 and Lys-203. Residue Asn-218 participates in phosphate binding. 3 N-linked (GlcNAc...) asparagine glycosylation sites follow: Asn-236, Asn-284, and Asn-387. An intrachain disulfide couples Cys-366 to Cys-487. In terms of domain architecture, PLD phosphodiesterase 2 spans Tyr-411–Tyr-437. His-416 provides a ligand contact to phosphate. The Nucleophile role is filled by His-416. Residue Phe-438 coordinates Mg(2+).

Belongs to the phospholipase D family. Homodimer. Interacts with APP. Post-translationally, N-glycosylated. In terms of processing, proteolytically processed to a soluble form that is stable within endosomes and lysosomes. During transport through the secretory pathway becomes proteolysed by cysteine proteases, thereby releasing a stable soluble lysosomal lumenal polypeptide, whereas the transmembrane-bound fragment is rapidly degraded. Its transport route to lysosomes involves ubiquitination and the ESCRT complex. Ubiquitinated. Ubiquitination mediates sorting into lysosomes.

The protein resides in the endoplasmic reticulum membrane. The protein localises to the lysosome lumen. It localises to the early endosome membrane. It is found in the late endosome membrane. Its subcellular location is the golgi apparatus membrane. The protein resides in the endosome membrane. It catalyses the reaction Exonucleolytic cleavage in the 5'- to 3'-direction to yield nucleoside 3'-phosphates.. It carries out the reaction a 5'-end 5'-dephospho-ribonucleotidyl-ribonucleotide-RNA + H2O = a ribonucleoside 3'-phosphate + a 5'-end dephospho-ribonucleoside-RNA + H(+). The catalysed reaction is a ribonucleoside 3'-phosphate-2'-3'-cyclophospho-GMP + H2O = a ribonucleoside 3'-phosphate + 2',3'-cyclophospho-GMP + H(+). The enzyme catalyses a 5'-end 5'-dephospho-2'-deoxyribonucleotidyl-2'-deoxyribonucleotide in single-stranded DNA + H2O = a 5'-end dephospho-2'-deoxyribonucleoside in single-stranded DNA + a 2'-deoxyribonucleoside 3'-phosphate + H(+). It catalyses the reaction a 5'-end 5'-phospho-2'-deoxyribonucleotide in single-stranded DNA + H2O = a 5'-end 5'-dephospho-2'-deoxyribonucleotide in single-stranded DNA + phosphate. It carries out the reaction a 3-lyso-sn-glycero-1-phospho-(3'-acyl-1'-sn-glycerol) + a 1-acyl-sn-glycerol = a 3-acyl-sn-glycero-1-phospho-(3'-acyl-1'-sn-glycerol) + glycerol. The catalysed reaction is 3-lyso-sn-glycero-1-phospho-(3'-(9Z-octadecenoyl)-1'-sn-glycerol) + 1-(9Z-octadecenoyl)-sn-glycerol = 3-(9Z-octadecenoyl)-sn-glycero-1-phospho-(3'-(9Z-octadecenoyl)-1'-sn-glycerol) + glycerol. In terms of biological role, 5'-&gt;3' exonuclease that hydrolyzes the phosphodiester bond of single-stranded DNA (ssDNA) and RNA molecules to form nucleoside 3'-monophosphates and 5'-end 5'-hydroxy deoxyribonucleotide/ribonucleotide fragments. Partially redundant with PLD4, can cleave all four nucleotides displaying higher efficiency for ssDNA and RNA fragments initiated with uridine and guanosine residues and lower efficiency for cytidine-initiated substrates. As a result, it does not always degrade polynucleotides to the single nucleotide level, it can stall at specific sites sparing certain fragments from exonucleolytic degradation. Processes self and pathogenic ssDNA and RNA molecules that reach the endolysosomal compartment via phagocytosis or autophagy and may serve as 'danger' signals for recognition by innate immune receptors such as toll-like receptors (TLRs). Degrades mitochondrial CpG-rich ssDNA fragments to prevent TLR9 activation and autoinflammatory response, but it can cleave viral RNA to generate ligands for TLR7 activation and initiate antiviral immune responses. In plasmacytoid dendritic cells, it cooperates with endonuclease RNASET2 to release 2',3'-cyclic guanosine monophosphate (2',3'-cGMP), a potent stimulatory ligand for TLR7. Produces 2',3'-cGMPs and cytidine-rich RNA fragments that occupy TLR7 ligand-binding pockets and trigger a signaling-competent state. Can exert polynucleotide phosphatase activity toward 5'-phosphorylated ssDNA substrates although at a slow rate. Transphosphatidylase that catalyzes the exchange with R to S stereo-inversion of the glycerol moiety between (S,R)-lysophosphatidylglycerol (LPG) and monoacylglycerol (MAG) substrates to yield (S,S)-bis(monoacylglycero)phosphate (BMP). Can synthesize a variety of (S,S)-BMPs representing the main phospholipid constituent of lysosomal intralumenal vesicle (ILV) membranes that bind acid hydrolases for lipid degradation. Regulates the homeostasis and interorganellar communication of the endolysosomal system with an overall impact on cellular removal of dysfunctional organelles via autophagy as well as proper protein and lipid turnover. May play a role in myotube formation in response to ER stress. This chain is 5'-3' exonuclease PLD3 (PLD3), found in Bos taurus (Bovine).